Consider the following 211-residue polypeptide: Thiamine-phosphate synthase (211 aa).

4-amino-2-methyl-5-(diphosphooxymethyl)pyrimidine is bound by residues 37–41 and N69; that span reads QLRIK. The Mg(2+) site is built by D70 and D89. A 4-amino-2-methyl-5-(diphosphooxymethyl)pyrimidine-binding site is contributed by S108. A 2-[(2R,5Z)-2-carboxy-4-methylthiazol-5(2H)-ylidene]ethyl phosphate-binding site is contributed by 134 to 136; the sequence is TQT. K137 contacts 4-amino-2-methyl-5-(diphosphooxymethyl)pyrimidine. 2-[(2R,5Z)-2-carboxy-4-methylthiazol-5(2H)-ylidene]ethyl phosphate contacts are provided by residues G166 and 186 to 187; that span reads VS.

Belongs to the thiamine-phosphate synthase family. Requires Mg(2+) as cofactor.

It catalyses the reaction 2-[(2R,5Z)-2-carboxy-4-methylthiazol-5(2H)-ylidene]ethyl phosphate + 4-amino-2-methyl-5-(diphosphooxymethyl)pyrimidine + 2 H(+) = thiamine phosphate + CO2 + diphosphate. It carries out the reaction 2-(2-carboxy-4-methylthiazol-5-yl)ethyl phosphate + 4-amino-2-methyl-5-(diphosphooxymethyl)pyrimidine + 2 H(+) = thiamine phosphate + CO2 + diphosphate. The enzyme catalyses 4-methyl-5-(2-phosphooxyethyl)-thiazole + 4-amino-2-methyl-5-(diphosphooxymethyl)pyrimidine + H(+) = thiamine phosphate + diphosphate. The protein operates within cofactor biosynthesis; thiamine diphosphate biosynthesis; thiamine phosphate from 4-amino-2-methyl-5-diphosphomethylpyrimidine and 4-methyl-5-(2-phosphoethyl)-thiazole: step 1/1. Its function is as follows. Condenses 4-methyl-5-(beta-hydroxyethyl)thiazole monophosphate (THZ-P) and 2-methyl-4-amino-5-hydroxymethyl pyrimidine pyrophosphate (HMP-PP) to form thiamine monophosphate (TMP). The protein is Thiamine-phosphate synthase of Salmonella paratyphi A (strain ATCC 9150 / SARB42).